Reading from the N-terminus, the 321-residue chain is Basic peroxidase (321 aa).

The N-terminal stretch at 1–30 is a signal peptide; it reads MSYHKSSGTTLMVPLFMLLISVNYFMSCNA. The residue at position 31 (Gln31) is a Pyrrolidone carboxylic acid. Cystine bridges form between Cys41/Cys117, Cys74/Cys79, Cys123/Cys317, and Cys202/Cys228. The active-site Proton acceptor is His72. The Ca(2+) site is built by Asp73, Val76, Gly78, Asp80, and Ser82. Pro165 lines the substrate pocket. Residue His195 participates in heme b binding. A Ca(2+)-binding site is contributed by Thr196. 2 N-linked (GlcNAc...) asparagine glycosylation sites follow: Asn211 and Asn221. Residues Asp241, Thr244, and Asp249 each contribute to the Ca(2+) site.

Belongs to the peroxidase family. Classical plant (class III) peroxidase subfamily. Requires heme b as cofactor. Ca(2+) serves as cofactor. In terms of processing, N-glycosylated. As to expression, expressed in tracheary elements, roots, young and old hypocotyls, and stems in the partially glycosylated form and in roots and young hypocotyls in the fully glycosylated form. None of the isoforms is significantly expressed in leaves or cotyledons.

The protein localises to the secreted. The enzyme catalyses 2 a phenolic donor + H2O2 = 2 a phenolic radical donor + 2 H2O. Functionally, removal of H(2)O(2), oxidation of toxic reductants, biosynthesis and degradation of lignin, suberization, auxin catabolism, response to environmental stresses such as wounding, pathogen attack and oxidative stress. These functions might be dependent on each isozyme/isoform in each plant tissue. Involved in the synthesis of highly polymerized lignins. This is Basic peroxidase (POD3) from Zinnia elegans (Garden zinnia).